Reading from the N-terminus, the 295-residue chain is Protoheme IX farnesyltransferase (295 aa).

The next 9 membrane-spanning stretches (helical) occupy residues 8 to 28 (VTKP…FLLA), 35 to 55 (YPLF…GCVF), 84 to 104 (ASLV…WFGA), 107 to 127 (LACW…SLYM), 132 to 152 (VYGT…GYCA), 162 to 182 (AILL…IAIF), 208 to 228 (ITLY…GGYA), 233 to 253 (LVVA…GYKV), and 264 to 284 (FVFS…DFMV).

The protein belongs to the UbiA prenyltransferase family. Protoheme IX farnesyltransferase subfamily.

The protein localises to the cell inner membrane. The catalysed reaction is heme b + (2E,6E)-farnesyl diphosphate + H2O = Fe(II)-heme o + diphosphate. The protein operates within porphyrin-containing compound metabolism; heme O biosynthesis; heme O from protoheme: step 1/1. Its function is as follows. Converts heme B (protoheme IX) to heme O by substitution of the vinyl group on carbon 2 of heme B porphyrin ring with a hydroxyethyl farnesyl side group. The protein is Protoheme IX farnesyltransferase of Klebsiella pneumoniae subsp. pneumoniae (strain ATCC 700721 / MGH 78578).